A 360-amino-acid polypeptide reads, in one-letter code: Peptide chain release factor 1 (360 aa).

Gln235 is subject to N5-methylglutamine. Residues Gln284–Thr293 show a composition bias toward basic and acidic residues. Residues Gln284–Asn311 form a disordered region.

The protein belongs to the prokaryotic/mitochondrial release factor family. In terms of processing, methylated by PrmC. Methylation increases the termination efficiency of RF1.

It localises to the cytoplasm. Peptide chain release factor 1 directs the termination of translation in response to the peptide chain termination codons UAG and UAA. This is Peptide chain release factor 1 from Sodalis glossinidius (strain morsitans).